We begin with the raw amino-acid sequence, 447 residues long: GTPase Der (447 aa).

EngA-type G domains lie at 3–167 (PVIA…ALPE) and 180–353 (IRLA…KSAN). Residues 9-16 (GRPNVGKS), 56-60 (DTGGF), 119-122 (NKAE), 186-193 (GRPNVGKS), 233-237 (DTAGL), and 298-301 (NKWD) contribute to the GTP site. The region spanning 354-438 (RKMPTPVLTR…PLRIEMKTSS (85 aa)) is the KH-like domain.

The protein belongs to the TRAFAC class TrmE-Era-EngA-EngB-Septin-like GTPase superfamily. EngA (Der) GTPase family. As to quaternary structure, associates with the 50S ribosomal subunit.

Its function is as follows. GTPase that plays an essential role in the late steps of ribosome biogenesis. This is GTPase Der from Acidovorax ebreus (strain TPSY) (Diaphorobacter sp. (strain TPSY)).